Reading from the N-terminus, the 127-residue chain is Large ribosomal subunit protein eL8 (127 aa).

Belongs to the eukaryotic ribosomal protein eL8 family. As to quaternary structure, part of the 50S ribosomal subunit. Probably part of the RNase P complex.

The protein resides in the cytoplasm. In terms of biological role, multifunctional RNA-binding protein that recognizes the K-turn motif in ribosomal RNA, the RNA component of RNase P, box H/ACA, box C/D and box C'/D' sRNAs. The polypeptide is Large ribosomal subunit protein eL8 (Picrophilus torridus (strain ATCC 700027 / DSM 9790 / JCM 10055 / NBRC 100828 / KAW 2/3)).